The following is a 460-amino-acid chain: Ribosomal protein uS12 methylthiotransferase RimO (460 aa).

One can recognise an MTTase N-terminal domain in the interval 18–134 (MKIHITSLGC…VTSIVAEVLR (117 aa)). Residues Cys-27, Cys-63, Cys-97, Cys-171, Cys-175, and Cys-178 each coordinate [4Fe-4S] cluster. One can recognise a Radical SAM core domain in the interval 157–387 (STPFHYAYVK…MVLQQEISLS (231 aa)). A TRAM domain is found at 390-456 (QEWIGKTLEV…HYDLMGEAID (67 aa)).

This sequence belongs to the methylthiotransferase family. RimO subfamily. Requires [4Fe-4S] cluster as cofactor.

It is found in the cytoplasm. It catalyses the reaction L-aspartate(89)-[ribosomal protein uS12]-hydrogen + (sulfur carrier)-SH + AH2 + 2 S-adenosyl-L-methionine = 3-methylsulfanyl-L-aspartate(89)-[ribosomal protein uS12]-hydrogen + (sulfur carrier)-H + 5'-deoxyadenosine + L-methionine + A + S-adenosyl-L-homocysteine + 2 H(+). Functionally, catalyzes the methylthiolation of an aspartic acid residue of ribosomal protein uS12. This is Ribosomal protein uS12 methylthiotransferase RimO from Heliobacterium modesticaldum (strain ATCC 51547 / Ice1).